The primary structure comprises 160 residues: MHTRAIYPGTFDPVTNGHADLIERAAKLFKHVVIGIALNPSKKPRFTLDERIELLKTVTAHLDNVEVVGFSGLLVDFAKEQQASVLVRGLRAVSDFEYEFQLANMNRRLSPDLESVFLTPAEENSFISSTLVKEVAHHGGDVSQFVHIKVANALMKKEQG.

Thr10 contributes to the substrate binding site. ATP contacts are provided by residues 10–11 (TF) and His18. 3 residues coordinate substrate: Lys42, Leu74, and Arg88. Residues 89–91 (GLR), Glu99, and 124–130 (NSFISST) contribute to the ATP site.

This sequence belongs to the bacterial CoaD family. As to quaternary structure, homohexamer. It depends on Mg(2+) as a cofactor.

It localises to the cytoplasm. The enzyme catalyses (R)-4'-phosphopantetheine + ATP + H(+) = 3'-dephospho-CoA + diphosphate. It functions in the pathway cofactor biosynthesis; coenzyme A biosynthesis; CoA from (R)-pantothenate: step 4/5. Functionally, reversibly transfers an adenylyl group from ATP to 4'-phosphopantetheine, yielding dephospho-CoA (dPCoA) and pyrophosphate. The chain is Phosphopantetheine adenylyltransferase from Shewanella piezotolerans (strain WP3 / JCM 13877).